A 245-amino-acid polypeptide reads, in one-letter code: Uridylate kinase (245 aa).

12–15 (KISG) provides a ligand contact to ATP. Residue Gly-55 participates in UMP binding. ATP is bound by residues Gly-56 and Arg-60. UMP is bound by residues Asp-76 and 137-144 (AGAPYLTT). ATP contacts are provided by Thr-164, Tyr-171, and Asp-174.

The protein belongs to the UMP kinase family. As to quaternary structure, homohexamer.

The protein resides in the cytoplasm. The catalysed reaction is UMP + ATP = UDP + ADP. It participates in pyrimidine metabolism; CTP biosynthesis via de novo pathway; UDP from UMP (UMPK route): step 1/1. Its activity is regulated as follows. Inhibited by UTP. Its function is as follows. Catalyzes the reversible phosphorylation of UMP to UDP. The sequence is that of Uridylate kinase from Chlamydia muridarum (strain MoPn / Nigg).